The following is a 321-amino-acid chain: Hydrolase 3 (321 aa).

Residues 80-82 (HGA) carry the Involved in the stabilization of the negatively charged intermediate by the formation of the oxyanion hole motif. Active-site residues include Ser-172 and Asp-267.

This sequence belongs to the 'GDXG' lipolytic enzyme family.

It catalyses the reaction dihydroprecondylocarpine acetate + NADPH = (+)-vincadifformine + acetate + NADP(+). It participates in alkaloid biosynthesis. Its function is as follows. Component of the seco-iridoid and derivatives monoterpenoid indole alkaloids (MIAs, e.g. vincadifformine) biosynthesis pathway. Catalyzes the conversion of O-acetylstemmadenine (OAS) to vincadifformine. May also trigger the formation of additional unknown MIAs. This is Hydrolase 3 from Catharanthus roseus (Madagascar periwinkle).